The chain runs to 189 residues: Ribosome hibernation promotion factor (189 aa).

Belongs to the HPF/YfiA ribosome-associated protein family. Long HPF subfamily. In terms of assembly, interacts with 100S ribosomes.

The protein localises to the cytoplasm. Its function is as follows. Required for dimerization of active 70S ribosomes into 100S ribosomes in stationary phase; 100S ribosomes are translationally inactive and sometimes present during exponential growth. This chain is Ribosome hibernation promotion factor, found in Staphylococcus epidermidis (strain ATCC 35984 / DSM 28319 / BCRC 17069 / CCUG 31568 / BM 3577 / RP62A).